The primary structure comprises 541 residues: Chaperonin GroEL 2 (541 aa).

ATP is bound by residues Thr29–Pro32, Asp86–Thr90, Gly413, Asn476–Ala478, and Asp492.

The protein belongs to the chaperonin (HSP60) family. In terms of assembly, forms a cylinder of 14 subunits composed of two heptameric rings stacked back-to-back. Interacts with the co-chaperonin GroES.

It is found in the cytoplasm. It carries out the reaction ATP + H2O + a folded polypeptide = ADP + phosphate + an unfolded polypeptide.. Its function is as follows. Together with its co-chaperonin GroES, plays an essential role in assisting protein folding. The GroEL-GroES system forms a nano-cage that allows encapsulation of the non-native substrate proteins and provides a physical environment optimized to promote and accelerate protein folding. The protein is Chaperonin GroEL 2 of Streptomyces avermitilis (strain ATCC 31267 / DSM 46492 / JCM 5070 / NBRC 14893 / NCIMB 12804 / NRRL 8165 / MA-4680).